The sequence spans 559 residues: Potassium-transporting ATPase potassium-binding subunit (559 aa).

12 helical membrane-spanning segments follow: residues 6–26 (FLLI…LGNV), 63–83 (LLAI…MLML), 131–151 (VGLT…IFAL), 173–193 (ITLW…IQQG), 253–273 (FVQM…FGDV), 283–303 (LLWA…WAEW), 327–347 (FGIL…CGAV), 356–376 (ALGG…FGGV), 379–399 (GLYG…LMIG), 416–436 (LTAL…ALAL), 484–504 (LLAF…MAIA), and 524–544 (GALF…LTFI).

This sequence belongs to the KdpA family. As to quaternary structure, the system is composed of three essential subunits: KdpA, KdpB and KdpC.

Its subcellular location is the cell inner membrane. Functionally, part of the high-affinity ATP-driven potassium transport (or Kdp) system, which catalyzes the hydrolysis of ATP coupled with the electrogenic transport of potassium into the cytoplasm. This subunit binds the periplasmic potassium ions and delivers the ions to the membrane domain of KdpB through an intramembrane tunnel. The protein is Potassium-transporting ATPase potassium-binding subunit of Enterobacter sp. (strain 638).